We begin with the raw amino-acid sequence, 450 residues long: MKSITQLENKKVLVLGLAKSGEAAARLLAKLGAIVTVNDGKAFEENPSAQSLLEEGIKVVCGGHPLELLDENFELMVKNPGIRYDNPMVARALEKEIPVWTEVELAYLVSEAPIIGITGSNGKTTTTTMIADVLNHGGKSGVLSGNIGFPASEVAQSVTNQDTLVMELSSFQLMGIESFHPHIAVITNLMPTHIDYHGSFEEYVAAKWNIQNEMTSDDFIILNFNQDLAKELATQTNAQVVPFSTVEKVDGAYLENGGLYFKGELLMHADELGVPGSHNVENALATIAVAKLSGVSNQAIKETLSSFGGVKHRLQFVDTIDDVKFYNDSKSTNILATQKALSGFDNSKVILIAGGLDRGNEFDELIPDITGLKKMVILGESAPRVKRAADKTGVTYLDAKDVADATRIAFEQASAGDVVLLSPANASWDMYKNFEVRGDEFITTVERLKG.

Position 119-125 (glycine 119–threonine 125) interacts with ATP.

The protein belongs to the MurCDEF family.

The protein localises to the cytoplasm. It catalyses the reaction UDP-N-acetyl-alpha-D-muramoyl-L-alanine + D-glutamate + ATP = UDP-N-acetyl-alpha-D-muramoyl-L-alanyl-D-glutamate + ADP + phosphate + H(+). It participates in cell wall biogenesis; peptidoglycan biosynthesis. Cell wall formation. Catalyzes the addition of glutamate to the nucleotide precursor UDP-N-acetylmuramoyl-L-alanine (UMA). This chain is UDP-N-acetylmuramoylalanine--D-glutamate ligase, found in Streptococcus thermophilus (strain ATCC BAA-491 / LMD-9).